The following is a 613-amino-acid chain: Pescadillo homolog (613 aa).

Positions 259 to 344 (KELSNELETK…MKQIEHDIIX (86 aa)) form a coiled coil. A disordered region spans residues 268–333 (KESTEDNIIE…KNDQKNDQKN (66 aa)). Residues 278–333 (ENEKKTKNGKTENCEKNDQENEKKTKNDKTKNCEKNDQKNDQKNDQKNDQKNDQKN) are compositionally biased toward basic and acidic residues. A BRCT domain is found at 350–453 (SVKNLFKNHI…MILSCEDYNI (104 aa)). A disordered region spans residues 485 to 517 (LSEDPQYNKSIQKNKTNSENKXNNYNDNENDMS). Residues 492 to 601 (NKSIQKNKTN…ENRQKLTIEK (110 aa)) are a coiled coil. Low complexity predominate over residues 497–511 (KNKTNSENKXNNYND).

This sequence belongs to the pescadillo family.

The protein localises to the nucleus. It localises to the nucleolus. Its subcellular location is the nucleoplasm. Its function is as follows. Required for maturation of ribosomal RNAs and formation of the large ribosomal subunit. The polypeptide is Pescadillo homolog (Plasmodium yoelii yoelii).